A 268-amino-acid polypeptide reads, in one-letter code: WUSCHEL-related homeobox 11 (268 aa).

Residues 1–35 (MDQEQTPHSPTRHSRSPPSSASGSTSAEPVRSRWS) are disordered. Over residues 16–27 (SPPSSASGSTSA) the composition is skewed to low complexity. The homeobox; WUS-type DNA-binding region spans 29 to 93 (PVRSRWSPKP…NRRSRSRRRQ (65 aa)).

Belongs to the WUS homeobox family.

The protein resides in the nucleus. Transcription factor which may be involved in developmental processes. The polypeptide is WUSCHEL-related homeobox 11 (WOX11) (Arabidopsis thaliana (Mouse-ear cress)).